A 498-amino-acid polypeptide reads, in one-letter code: ATP synthase subunit beta, chloroplastic (498 aa).

Residue 172 to 179 (GGAGVGKT) coordinates ATP.

This sequence belongs to the ATPase alpha/beta chains family. F-type ATPases have 2 components, CF(1) - the catalytic core - and CF(0) - the membrane proton channel. CF(1) has five subunits: alpha(3), beta(3), gamma(1), delta(1), epsilon(1). CF(0) has four main subunits: a(1), b(1), b'(1) and c(9-12).

The protein resides in the plastid. The protein localises to the chloroplast thylakoid membrane. It carries out the reaction ATP + H2O + 4 H(+)(in) = ADP + phosphate + 5 H(+)(out). Produces ATP from ADP in the presence of a proton gradient across the membrane. The catalytic sites are hosted primarily by the beta subunits. The sequence is that of ATP synthase subunit beta, chloroplastic from Hyphaene coriacea (Ilala palm).